The primary structure comprises 865 residues: Protein translocase subunit SecA (865 aa).

Residues glutamine 93, 111-115 (GEGKT), and aspartate 501 contribute to the ATP site. Zn(2+) is bound by residues cysteine 841, cysteine 843, cysteine 852, and cysteine 853.

It belongs to the SecA family. Monomer and homodimer. Part of the essential Sec protein translocation apparatus which comprises SecA, SecYEG and auxiliary proteins SecDF-YajC and YidC. It depends on Zn(2+) as a cofactor.

Its subcellular location is the cell inner membrane. The protein resides in the cytoplasm. It catalyses the reaction ATP + H2O + cellular proteinSide 1 = ADP + phosphate + cellular proteinSide 2.. Its function is as follows. Part of the Sec protein translocase complex. Interacts with the SecYEG preprotein conducting channel. Has a central role in coupling the hydrolysis of ATP to the transfer of proteins into and across the cell membrane, serving as an ATP-driven molecular motor driving the stepwise translocation of polypeptide chains across the membrane. The sequence is that of Protein translocase subunit SecA from Helicobacter pylori (strain P12).